Here is a 288-residue protein sequence, read N- to C-terminus: Geranylgeranyl diphosphate synthase (288 aa).

Residues arginine 43 and histidine 73 each coordinate isopentenyl diphosphate. Mg(2+) is bound by residues aspartate 80 and aspartate 86. Arginine 91 is a (2E,6E)-farnesyl diphosphate binding site. Residue arginine 92 coordinates isopentenyl diphosphate. Residues lysine 170, threonine 171, and glutamine 205 each coordinate (2E,6E)-farnesyl diphosphate.

This sequence belongs to the FPP/GGPP synthase family. Mg(2+) is required as a cofactor.

It carries out the reaction isopentenyl diphosphate + (2E,6E)-farnesyl diphosphate = (2E,6E,10E)-geranylgeranyl diphosphate + diphosphate. It functions in the pathway isoprenoid biosynthesis; geranylgeranyl diphosphate biosynthesis; geranylgeranyl diphosphate from farnesyl diphosphate and isopentenyl diphosphate: step 1/1. Functionally, catalyzes the condensation of farnesyl diphosphate (FPP) and isopentenyl diphosphate (IPP) to yield geranylgeranyl diphosphate (GGPP) needed for biosynthesis of carotenoids and diterpenes. The sequence is that of Geranylgeranyl diphosphate synthase (crtE) from Cereibacter sphaeroides (strain ATCC 17023 / DSM 158 / JCM 6121 / CCUG 31486 / LMG 2827 / NBRC 12203 / NCIMB 8253 / ATH 2.4.1.) (Rhodobacter sphaeroides).